A 219-amino-acid chain; its full sequence is Vacuolar iron transporter homolog 2.1 (219 aa).

The span at 1 to 15 (MTSNVQLSETNSPRN) shows a compositional bias: polar residues. A disordered region spans residues 1–26 (MTSNVQLSETNSPRNQKTRPRAEKEE). The residue at position 2 (T2) is an N-acetylthreonine. The Cytoplasmic portion of the chain corresponds to 2–37 (TSNVQLSETNSPRNQKTRPRAEKEEVDYMQRAQWLR). The chain crosses the membrane as a helical span at residues 38-58 (AALLGANDGLVTVASLMMGVG). The Vacuolar segment spans residues 59–67 (SIKEDVKAM). A helical transmembrane segment spans residues 68–88 (LLVGFAGLVAGACSMAIGEFV). Over 89 to 133 (SVCTQRDIETAQMKRAIEHKTSLSAIDEQEEEEKKERLPNPGQAA) the chain is Cytoplasmic. Residues 134 to 154 (IASALAFSVGAAMPLLGAVFI) form a helical membrane-spanning segment. The Vacuolar portion of the chain corresponds to 155–161 (ENHKVRM). Residues 162-182 (VVVAVVATIALVVFGVTGAVL) traverse the membrane as a helical segment. The Cytoplasmic segment spans residues 183 to 193 (GKTSVVKSSVR). The helical transmembrane segment at 194 to 214 (VVIGGWMAMALTFGLTKFIGS) threads the bilayer. The Vacuolar segment spans residues 215-219 (AAMQI).

This sequence belongs to the CCC1 family. Highly expressed in roots. inflorescences and at lower levels in leaves.

It localises to the vacuole membrane. The catalysed reaction is Fe(2+)(in) = Fe(2+)(out). In terms of biological role, vacuolar iron transporter involved in the transfer of iron ions from the cytosol to the vacuole for intracellular iron storage. Involved in regulation of cellular iron homeostasis. Vacuolar iron storage is required for seed embryo and seedling development. The protein is Vacuolar iron transporter homolog 2.1 of Arabidopsis thaliana (Mouse-ear cress).